Here is a 344-residue protein sequence, read N- to C-terminus: tRNA N6-adenosine threonylcarbamoyltransferase (344 aa).

Positions 116 and 120 each coordinate Fe cation. Residues 138-142, Asp-171, Gly-184, Asp-188, and Asn-277 contribute to the substrate site; that span reads LVSGG. Residue Asp-307 participates in Fe cation binding.

Belongs to the KAE1 / TsaD family. Requires Fe(2+) as cofactor.

It localises to the cytoplasm. The enzyme catalyses L-threonylcarbamoyladenylate + adenosine(37) in tRNA = N(6)-L-threonylcarbamoyladenosine(37) in tRNA + AMP + H(+). Its function is as follows. Required for the formation of a threonylcarbamoyl group on adenosine at position 37 (t(6)A37) in tRNAs that read codons beginning with adenine. Is involved in the transfer of the threonylcarbamoyl moiety of threonylcarbamoyl-AMP (TC-AMP) to the N6 group of A37, together with TsaE and TsaB. TsaD likely plays a direct catalytic role in this reaction. The polypeptide is tRNA N6-adenosine threonylcarbamoyltransferase (Latilactobacillus sakei subsp. sakei (strain 23K) (Lactobacillus sakei subsp. sakei)).